A 721-amino-acid polypeptide reads, in one-letter code: Homeobox-leucine zipper protein HDG2 (721 aa).

The interval Asn-17–Arg-70 is disordered. A compositionally biased stretch (basic and acidic residues) spans Tyr-21–Asp-34. The segment at residues Lys-64–His-123 is a DNA-binding region (homeobox). Residues Lys-120–Tyr-194 adopt a coiled-coil conformation. The START domain occupies Thr-242–Ser-468.

Belongs to the HD-ZIP homeobox family. Class IV subfamily. In terms of assembly, interacts with AIL7/PLT7, ANT, BBM and AIL1. In terms of tissue distribution, expressed in hairless cell files of the hypocotyl epidermis. Expressed in shoot apical meristem (SAM) with higher levels in L1 cells and the epidermal layer of young leaves. Expressed in primary root tips, in the L1 of apical inflorescence meristems, early flower primordia, carpel epidermis, ovule primordia, nucellus, chalaze and seed coat.

It is found in the nucleus. Its function is as follows. Probable transcription factor. Involved, together with PDF2, in the regulation of flower organs development by promoting the expression of APETALA 3 (AP3) in the epidermis and internal cell layers of developing flowers. The protein is Homeobox-leucine zipper protein HDG2 of Arabidopsis thaliana (Mouse-ear cress).